The chain runs to 254 residues: Pyruvate dehydrogenase complex repressor (254 aa).

Residues 9 to 77 (PKLSDVIEQQ…QGGGTFVQSS (69 aa)) enclose the HTH gntR-type domain. A DNA-binding region (H-T-H motif) is located at residues 37–56 (ERELAKQFDVSRPSLREAIQ).

Functionally, transcriptional repressor for the pyruvate dehydrogenase complex genes aceEF and lpd. The chain is Pyruvate dehydrogenase complex repressor (pdhR) from Escherichia coli O6:H1 (strain CFT073 / ATCC 700928 / UPEC).